A 1900-amino-acid chain; its full sequence is Phosphatidylinositol 4-kinase STT4 (1900 aa).

At S459 the chain carries Phosphoserine. The 186-residue stretch at 1345–1530 (KIEGADSNEL…KPTLDRIRER (186 aa)) folds into the PIK helical domain. The interval 1531-1648 (MVSSFSQSHR…EKWQAAIFKV (118 aa)) is pleckstrin homology (PH) domain conferring phosphoinositide binding specificity. The region spanning 1617-1884 (FMATFKIKKD…LIRKSYESIF (268 aa)) is the PI3K/PI4K catalytic domain. Positions 1623 to 1629 (IKKDVKD) are G-loop. The segment at 1751–1759 (QFKDRHNGN) is catalytic loop. The activation loop stretch occupies residues 1770–1794 (HIDFGFIFDIVPGGIKFEAVPFKLT).

Belongs to the PI3/PI4-kinase family. Type III PI4K subfamily.

The catalysed reaction is a 1,2-diacyl-sn-glycero-3-phospho-(1D-myo-inositol) + ATP = a 1,2-diacyl-sn-glycero-3-phospho-(1D-myo-inositol 4-phosphate) + ADP + H(+). In terms of biological role, acts on phosphatidylinositol (PI) in the first committed step in the production of the second messenger inositol 1,4,5,-trisphosphate. STT4 functions in PKC1 protein kinase pathway. This Saccharomyces cerevisiae (strain ATCC 204508 / S288c) (Baker's yeast) protein is Phosphatidylinositol 4-kinase STT4 (STT4).